The following is a 271-amino-acid chain: Delta(7)-sterol-C5(6)-desaturase (271 aa).

Transmembrane regions (helical) follow at residues isoleucine 44–leucine 64 and valine 120–isoleucine 140. The Fatty acid hydroxylase domain occupies alanine 130–threonine 259. Positions histidine 144–histidine 148 match the Histidine box-1 motif. Residues histidine 158–histidine 162 carry the Histidine box-2 motif. A helical transmembrane segment spans residues histidine 190 to leucine 210. A Histidine box-3 motif is present at residues histidine 235–histidine 239.

This sequence belongs to the sterol desaturase family. Fe cation is required as a cofactor.

It is found in the endoplasmic reticulum membrane. It catalyses the reaction a Delta(7)-sterol + 2 Fe(II)-[cytochrome b5] + O2 + 2 H(+) = a Delta(5),Delta(7)-sterol + 2 Fe(III)-[cytochrome b5] + 2 H2O. Its function is as follows. Involved in the biosynthesis of sitosterol and campesterol. The chain is Delta(7)-sterol-C5(6)-desaturase from Nicotiana tabacum (Common tobacco).